Consider the following 64-residue polypeptide: Translation machinery-associated protein 7 homolog (64 aa).

A disordered region spans residues 1–64; sequence MSGREGGKKK…GGGIKKSGKK (64 aa). Basic and acidic residues predominate over residues 27–38; it reads MAFKQKQKEQQK. Residues 27 to 50 adopt a coiled-coil conformation; that stretch reads MAFKQKQKEQQKALEAAKANASKK. Low complexity predominate over residues 39-50; sequence ALEAAKANASKK. Gly residues predominate over residues 53–64; that stretch reads LVGGGIKKSGKK.

The sequence is that of Translation machinery-associated protein 7 homolog from Drosophila melanogaster (Fruit fly).